Consider the following 226-residue polypeptide: Ribonuclease 3 (226 aa).

The RNase III domain maps to 7–129 (LPRLCRTLGY…IIGAIYLDSD (123 aa)). Position 42 (Glu42) interacts with Mg(2+). Residue Asp46 is part of the active site. The Mg(2+) site is built by Asp115 and Glu118. The active site involves Glu118. The DRBM domain occupies 156–226 (DAKTLLQEYL…AAQVLELLKK (71 aa)).

The protein belongs to the ribonuclease III family. Homodimer. Mg(2+) serves as cofactor.

The protein resides in the cytoplasm. It carries out the reaction Endonucleolytic cleavage to 5'-phosphomonoester.. Functionally, digests double-stranded RNA. Involved in the processing of primary rRNA transcript to yield the immediate precursors to the large and small rRNAs (23S and 16S). Processes some mRNAs, and tRNAs when they are encoded in the rRNA operon. Processes pre-crRNA and tracrRNA of type II CRISPR loci if present in the organism. The sequence is that of Ribonuclease 3 from Shewanella sp. (strain ANA-3).